A 460-amino-acid chain; its full sequence is Cysteine--tRNA ligase (460 aa).

Residue Cys29 participates in Zn(2+) binding. Residues 31–41 carry the 'HIGH' region motif; sequence MTVYDYMHIGH. 3 residues coordinate Zn(2+): Cys210, His235, and Glu239. Residues 267–271 carry the 'KMSKS' region motif; that stretch reads KMSKS. Lys270 serves as a coordination point for ATP.

This sequence belongs to the class-I aminoacyl-tRNA synthetase family. In terms of assembly, monomer. The cofactor is Zn(2+).

The protein localises to the cytoplasm. The catalysed reaction is tRNA(Cys) + L-cysteine + ATP = L-cysteinyl-tRNA(Cys) + AMP + diphosphate. The protein is Cysteine--tRNA ligase of Coxiella burnetii (strain RSA 493 / Nine Mile phase I).